A 240-amino-acid polypeptide reads, in one-letter code: 6-carboxyhexanoate--CoA ligase (240 aa).

The protein belongs to the BioW family. As to quaternary structure, homodimer. It depends on Mg(2+) as a cofactor.

It catalyses the reaction heptanedioate + ATP + CoA = 6-carboxyhexanoyl-CoA + AMP + diphosphate. It participates in metabolic intermediate metabolism; pimeloyl-CoA biosynthesis; pimeloyl-CoA from pimelate: step 1/1. Catalyzes the transformation of pimelate into pimeloyl-CoA with concomitant hydrolysis of ATP to AMP. This is 6-carboxyhexanoate--CoA ligase from Aquifex aeolicus (strain VF5).